The primary structure comprises 361 residues: 3-dehydroquinate synthase (361 aa).

Residues 106–110 (GVVGD), 130–131 (TT), K143, and K152 each bind NAD(+). E185, H248, and H265 together coordinate Zn(2+).

The protein belongs to the sugar phosphate cyclases superfamily. Dehydroquinate synthase family. NAD(+) is required as a cofactor. Requires Co(2+) as cofactor. The cofactor is Zn(2+).

Its subcellular location is the cytoplasm. The catalysed reaction is 7-phospho-2-dehydro-3-deoxy-D-arabino-heptonate = 3-dehydroquinate + phosphate. It participates in metabolic intermediate biosynthesis; chorismate biosynthesis; chorismate from D-erythrose 4-phosphate and phosphoenolpyruvate: step 2/7. Functionally, catalyzes the conversion of 3-deoxy-D-arabino-heptulosonate 7-phosphate (DAHP) to dehydroquinate (DHQ). This Leptospira interrogans serogroup Icterohaemorrhagiae serovar copenhageni (strain Fiocruz L1-130) protein is 3-dehydroquinate synthase.